The sequence spans 130 residues: Small ribosomal subunit protein uS9 (130 aa).

Belongs to the universal ribosomal protein uS9 family.

This chain is Small ribosomal subunit protein uS9, found in Pseudomonas syringae pv. tomato (strain ATCC BAA-871 / DC3000).